A 185-amino-acid chain; its full sequence is Elongation factor P (185 aa).

This sequence belongs to the elongation factor P family.

The protein resides in the cytoplasm. The protein operates within protein biosynthesis; polypeptide chain elongation. Involved in peptide bond synthesis. Stimulates efficient translation and peptide-bond synthesis on native or reconstituted 70S ribosomes in vitro. Probably functions indirectly by altering the affinity of the ribosome for aminoacyl-tRNA, thus increasing their reactivity as acceptors for peptidyl transferase. This is Elongation factor P from Desulfovibrio desulfuricans (strain ATCC 27774 / DSM 6949 / MB).